We begin with the raw amino-acid sequence, 213 residues long: Probable aspartate aminotransferase (213 aa).

The L-aspartate site is built by G47, W133, and N183.

Belongs to the class-I pyridoxal-phosphate-dependent aminotransferase family. As to quaternary structure, homodimer. The cofactor is pyridoxal 5'-phosphate.

Its subcellular location is the cytoplasm. The catalysed reaction is L-aspartate + 2-oxoglutarate = oxaloacetate + L-glutamate. This is Probable aspartate aminotransferase (aspC) from Streptomyces griseus.